The chain runs to 546 residues: Chaperonin GroEL (546 aa).

ATP is bound by residues 30 to 33 (TLGP), lysine 51, 87 to 91 (DGTTT), glycine 415, and aspartate 496. The segment at 526–546 (PEDKPAPAMPGGMGGMGGMDF) is disordered. Positions 536–546 (GGMGGMGGMDF) are enriched in gly residues.

This sequence belongs to the chaperonin (HSP60) family. Forms a cylinder of 14 subunits composed of two heptameric rings stacked back-to-back. Interacts with the co-chaperonin GroES.

Its subcellular location is the cytoplasm. The catalysed reaction is ATP + H2O + a folded polypeptide = ADP + phosphate + an unfolded polypeptide.. Functionally, together with its co-chaperonin GroES, plays an essential role in assisting protein folding. The GroEL-GroES system forms a nano-cage that allows encapsulation of the non-native substrate proteins and provides a physical environment optimized to promote and accelerate protein folding. The sequence is that of Chaperonin GroEL from Zymomonas mobilis subsp. mobilis (strain ATCC 31821 / ZM4 / CP4).